Consider the following 304-residue polypeptide: RING-H2 finger protein ATL2 (304 aa).

The chain crosses the membrane as a helical span at residues 30–50 (IMLSAIVILFFVVILMVFLHL). An RING-type; atypical zinc finger spans residues 119–161 (CAVCLSEFEESETGRVLPNCQHTFHVDCIDMWFHSHSTCPLCR). Residues 194–304 (EPSSSSGLTD…DIERGGEESR (111 aa)) are disordered. Residues 227 to 244 (VPRRTFSEFEDELTRRDS) are compositionally biased toward basic and acidic residues. Residues 283–293 (PTLSCRIQMTE) are compositionally biased toward polar residues. The span at 295–304 (DIERGGEESR) shows a compositional bias: basic and acidic residues.

The protein belongs to the RING-type zinc finger family. ATL subfamily. Preferentially expressed around the apical meristem region.

It localises to the membrane. It carries out the reaction S-ubiquitinyl-[E2 ubiquitin-conjugating enzyme]-L-cysteine + [acceptor protein]-L-lysine = [E2 ubiquitin-conjugating enzyme]-L-cysteine + N(6)-ubiquitinyl-[acceptor protein]-L-lysine.. It participates in protein modification; protein ubiquitination. In terms of biological role, may be involved in the early steps of the plant defense signaling pathway. The polypeptide is RING-H2 finger protein ATL2 (ATL2) (Arabidopsis thaliana (Mouse-ear cress)).